The following is a 224-amino-acid chain: Ribonuclease T (224 aa).

Residues 1 to 11 (MSEDLYEDDLD) are compositionally biased toward acidic residues. A disordered region spans residues 1 to 22 (MSEDLYEDDLDTQGSSGPRHPM). The Exonuclease domain occupies 32–206 (VVVDVETGGF…YDTEKTAELF (175 aa)). Residues Asp-35, Glu-37, His-193, and Asp-198 each coordinate Mg(2+). Residue His-193 is the Proton donor/acceptor of the active site.

It belongs to the RNase T family. As to quaternary structure, homodimer. Mg(2+) serves as cofactor.

Functionally, trims short 3' overhangs of a variety of RNA species, leaving a one or two nucleotide 3' overhang. Responsible for the end-turnover of tRNA: specifically removes the terminal AMP residue from uncharged tRNA (tRNA-C-C-A). Also appears to be involved in tRNA biosynthesis. The protein is Ribonuclease T of Pseudomonas putida (strain ATCC 700007 / DSM 6899 / JCM 31910 / BCRC 17059 / LMG 24140 / F1).